A 367-amino-acid polypeptide reads, in one-letter code: D-alanine--D-alanine ligase (367 aa).

Positions 145–351 (KRLLRDAGLP…QPALMDALIA (207 aa)) constitute an ATP-grasp domain. 174 to 229 (HAVGCSELFIKPANLGSSVGISKARTPQEFAAACDLALRFDGKILIERCISPVREI) contacts ATP. Residues Asp-306, Glu-318, and Asn-320 each coordinate Mg(2+).

Belongs to the D-alanine--D-alanine ligase family. Mg(2+) is required as a cofactor. The cofactor is Mn(2+).

Its subcellular location is the cytoplasm. The enzyme catalyses 2 D-alanine + ATP = D-alanyl-D-alanine + ADP + phosphate + H(+). Its pathway is cell wall biogenesis; peptidoglycan biosynthesis. Functionally, cell wall formation. This is D-alanine--D-alanine ligase from Bradyrhizobium sp. (strain BTAi1 / ATCC BAA-1182).